Here is a 240-residue protein sequence, read N- to C-terminus: Uridylate kinase (240 aa).

Residue 12–15 (KLSG) coordinates ATP. The interval 20–25 (GKQGFG) is involved in allosteric activation by GTP. Gly-54 contributes to the UMP binding site. ATP is bound by residues Gly-55 and Arg-59. Residues Asp-74 and 135 to 142 (TGNPYFST) contribute to the UMP site. ATP contacts are provided by Asn-163, Tyr-169, and Asp-172.

This sequence belongs to the UMP kinase family. Homohexamer.

Its subcellular location is the cytoplasm. It carries out the reaction UMP + ATP = UDP + ADP. Its pathway is pyrimidine metabolism; CTP biosynthesis via de novo pathway; UDP from UMP (UMPK route): step 1/1. Allosterically activated by GTP. Inhibited by UTP. In terms of biological role, catalyzes the reversible phosphorylation of UMP to UDP. The polypeptide is Uridylate kinase (Geobacillus thermodenitrificans (strain NG80-2)).